The chain runs to 215 residues: 2-dehydro-3-deoxy-phosphogluconate aldolase (215 aa).

The active-site Proton acceptor is the Glu46. Residues Arg50, Thr74, and Lys134 each contribute to the pyruvate site. Lys134 (schiff-base intermediate with substrate) is an active-site residue.

It belongs to the KHG/KDPG aldolase family. In terms of assembly, homotrimer.

The enzyme catalyses 2-dehydro-3-deoxy-6-phospho-D-gluconate = D-glyceraldehyde 3-phosphate + pyruvate. It participates in carbohydrate acid metabolism; 2-dehydro-3-deoxy-D-gluconate degradation; D-glyceraldehyde 3-phosphate and pyruvate from 2-dehydro-3-deoxy-D-gluconate: step 2/2. Its function is as follows. Involved in the degradation of glucose via the Entner-Doudoroff pathway. Catalyzes the reversible, stereospecific retro-aldol cleavage of 2-keto-3-deoxy-6-phosphogluconate (KDPG) to pyruvate and D-glyceraldehyde-3-phosphate. Involved in the degradation of 3,6-anhydro-L-galactose (L-AnG), which is the major monomeric sugar of red macroalgae. The cleavage of KDPG to glyceraldehyde 3-phosphate and pyruvate is the sixth step of this pathway. The polypeptide is 2-dehydro-3-deoxy-phosphogluconate aldolase (Pseudoalteromonas atlantica (strain T6c / ATCC BAA-1087)).